Reading from the N-terminus, the 240-residue chain is Large ribosomal subunit protein uL2 (240 aa).

The segment covering 1–10 (MGHRISTQSR) has biased composition (polar residues). Disordered stretches follow at residues 1-20 (MGHR…YRAP) and 204-240 (FGGG…GYRR).

Belongs to the universal ribosomal protein uL2 family. In terms of assembly, part of the 50S ribosomal subunit. Forms a bridge to the 30S subunit in the 70S ribosome.

One of the primary rRNA binding proteins. Required for association of the 30S and 50S subunits to form the 70S ribosome, for tRNA binding and peptide bond formation. It has been suggested to have peptidyltransferase activity; this is somewhat controversial. Makes several contacts with the 16S rRNA in the 70S ribosome. This Methanocorpusculum labreanum (strain ATCC 43576 / DSM 4855 / Z) protein is Large ribosomal subunit protein uL2.